The primary structure comprises 269 residues: Cytolethal distending toxin subunit B (269 aa).

Residues 1–18 form the signal peptide; sequence MKKYIISLIVFLSFYAQA. The Nuclear localization signal motif lies at 195-210; sequence REPADLEMNLTVPVRR.

In terms of assembly, heterotrimer of 3 subunits, CdtA, CdtB and CdtC.

Its subcellular location is the secreted. In terms of biological role, part of the tripartite complex that is required for the CDT activity. CdtB exhibits a DNA-nicking endonuclease activity, and very probably causes DNA damage in intoxicated cells. This damage induces G2/M cell cycle arrest, chromatin fragmentation, cell distention and nucleus enlargement. In Escherichia coli, this protein is Cytolethal distending toxin subunit B (cdtB).